Consider the following 435-residue polypeptide: Tol-Pal system protein TolB (435 aa).

An N-terminal signal peptide occupies residues 1 to 26 (MKTFSLLRILIVLVGMAGAFATPAMA).

It belongs to the TolB family. In terms of assembly, the Tol-Pal system is composed of five core proteins: the inner membrane proteins TolA, TolQ and TolR, the periplasmic protein TolB and the outer membrane protein Pal. They form a network linking the inner and outer membranes and the peptidoglycan layer.

The protein resides in the periplasm. In terms of biological role, part of the Tol-Pal system, which plays a role in outer membrane invagination during cell division and is important for maintaining outer membrane integrity. The protein is Tol-Pal system protein TolB of Allorhizobium ampelinum (strain ATCC BAA-846 / DSM 112012 / S4) (Agrobacterium vitis (strain S4)).